The following is a 203-amino-acid chain: WUSCHEL-related homeobox 3 (203 aa).

A DNA-binding region (homeobox; WUS-type) is located at residues T4–L68. Disordered stretches follow at residues C73–A95, L109–Q135, and S180–N203. Positions P80–P91 are enriched in pro residues. Residues L109–P118 are compositionally biased toward basic residues. Low complexity-rich tracts occupy residues Y119–Q135 and C190–N203.

This sequence belongs to the WUS homeobox family.

Its subcellular location is the nucleus. Transcription factor which may be involved in developmental processes. The polypeptide is WUSCHEL-related homeobox 3 (WOX3) (Oryza sativa subsp. indica (Rice)).